The chain runs to 207 residues: LexA repressor (207 aa).

Positions 28-48 (RAEIAQKLGFKSANAAEEHLK) form a DNA-binding region, H-T-H motif. Active-site for autocatalytic cleavage activity residues include serine 124 and lysine 161.

It belongs to the peptidase S24 family. In terms of assembly, homodimer.

It carries out the reaction Hydrolysis of Ala-|-Gly bond in repressor LexA.. Functionally, represses a number of genes involved in the response to DNA damage (SOS response), including recA and lexA. In the presence of single-stranded DNA, RecA interacts with LexA causing an autocatalytic cleavage which disrupts the DNA-binding part of LexA, leading to derepression of the SOS regulon and eventually DNA repair. This chain is LexA repressor, found in Aeromonas salmonicida (strain A449).